A 246-amino-acid chain; its full sequence is Homeobox protein SIX6 (246 aa).

A DNA-binding region (homeobox) is located at residues 128-187; it reads GEQKTHCFKERTRHLLREWYLQDPYPNPSKKRELAQATGLTPTQVGNWFKNRRQRDRAAA. The tract at residues 190 to 246 is disordered; that stretch reads NRLQQQVLSQGSGRALRAEGDGTPEVLGVATSPAASLSSKAATSAISITSSDSECDI. Residues 191 to 201 show a composition bias toward polar residues; the sequence is RLQQQVLSQGS. Position 212 is a phosphothreonine (threonine 212). The segment covering 219–246 has biased composition (low complexity); sequence ATSPAASLSSKAATSAISITSSDSECDI. Phosphoserine is present on residues serine 221, serine 225, serine 227, and serine 228.

It belongs to the SIX/Sine oculis homeobox family. Interacts with TLE4 and TLE5. In terms of tissue distribution, expressed in the developing and adult retina. Also expressed in the hypothalamic and the pituitary regions.

The protein localises to the nucleus. Functionally, may be involved in eye development. This Homo sapiens (Human) protein is Homeobox protein SIX6 (SIX6).